Consider the following 269-residue polypeptide: uncharacterized protein (269 aa).

5 consecutive transmembrane segments (helical) span residues 65–85 (FSLF…LFVM), 156–176 (VTSV…ISMV), 182–202 (YTRI…WLGF), 206–226 (MMSF…NDFW), and 242–262 (TLSA…EFSF). The short motif at 266-269 (KKKW) is the Di-lysine motif element.

This sequence belongs to the SURF4 family.

It is found in the membrane. This is an uncharacterized protein from Caenorhabditis elegans.